We begin with the raw amino-acid sequence, 77 residues long: Large ribosomal subunit protein eL20 (77 aa).

The protein belongs to the eukaryotic ribosomal protein eL20 family. As to quaternary structure, part of the 50S ribosomal subunit. Binds 23S rRNA.

This is Large ribosomal subunit protein eL20 from Thermococcus onnurineus (strain NA1).